The primary structure comprises 350 residues: Holliday junction branch migration complex subunit RuvB (350 aa).

The interval 1 to 20 is disordered; it reads MIEADRLITASPREREEQQD. A large ATPase domain (RuvB-L) region spans residues 4–184; sequence ADRLITASPR…FGIVQRLEFY (181 aa). Residues isoleucine 23, arginine 24, glycine 65, lysine 68, threonine 69, threonine 70, 131-133, arginine 174, tyrosine 184, and arginine 221 each bind ATP; that span reads EDF. Position 69 (threonine 69) interacts with Mg(2+). Residues 185-255 are small ATPAse domain (RuvB-S); the sequence is GIDDLATIVT…IADQALNLLD (71 aa). The head domain (RuvB-H) stretch occupies residues 258–350; it reads ERGFDHSDRR…SGDLFAVSDE (93 aa). Positions 294, 313, and 318 each coordinate DNA.

This sequence belongs to the RuvB family. As to quaternary structure, homohexamer. Forms an RuvA(8)-RuvB(12)-Holliday junction (HJ) complex. HJ DNA is sandwiched between 2 RuvA tetramers; dsDNA enters through RuvA and exits via RuvB. An RuvB hexamer assembles on each DNA strand where it exits the tetramer. Each RuvB hexamer is contacted by two RuvA subunits (via domain III) on 2 adjacent RuvB subunits; this complex drives branch migration. In the full resolvosome a probable DNA-RuvA(4)-RuvB(12)-RuvC(2) complex forms which resolves the HJ.

The protein localises to the cytoplasm. It catalyses the reaction ATP + H2O = ADP + phosphate + H(+). The RuvA-RuvB-RuvC complex processes Holliday junction (HJ) DNA during genetic recombination and DNA repair, while the RuvA-RuvB complex plays an important role in the rescue of blocked DNA replication forks via replication fork reversal (RFR). RuvA specifically binds to HJ cruciform DNA, conferring on it an open structure. The RuvB hexamer acts as an ATP-dependent pump, pulling dsDNA into and through the RuvAB complex. RuvB forms 2 homohexamers on either side of HJ DNA bound by 1 or 2 RuvA tetramers; 4 subunits per hexamer contact DNA at a time. Coordinated motions by a converter formed by DNA-disengaged RuvB subunits stimulates ATP hydrolysis and nucleotide exchange. Immobilization of the converter enables RuvB to convert the ATP-contained energy into a lever motion, pulling 2 nucleotides of DNA out of the RuvA tetramer per ATP hydrolyzed, thus driving DNA branch migration. The RuvB motors rotate together with the DNA substrate, which together with the progressing nucleotide cycle form the mechanistic basis for DNA recombination by continuous HJ branch migration. Branch migration allows RuvC to scan DNA until it finds its consensus sequence, where it cleaves and resolves cruciform DNA. The chain is Holliday junction branch migration complex subunit RuvB from Ectopseudomonas mendocina (strain ymp) (Pseudomonas mendocina).